The following is a 153-amino-acid chain: MLTQDEVSAQLGQYMLRGYTLLDTICPKCEKVPMMRLRDNPMFCVSCINDLKESDASEHVTVAESAPKIASLPISKTNDAERSQQTTKAPVMERTESSHQATLSVYSRLISELESQLDDRLPLPHNTEFLDVSLQRIERILNLISLAKSLMSS.

A disordered region spans residues 72–98; that stretch reads LPISKTNDAERSQQTTKAPVMERTESS.

The protein localises to the cytoplasm. Its subcellular location is the nucleus. This is an uncharacterized protein from Schizosaccharomyces pombe (strain 972 / ATCC 24843) (Fission yeast).